The sequence spans 152 residues: Small ribosomal subunit protein uS13 (152 aa).

It belongs to the universal ribosomal protein uS13 family.

It localises to the cytoplasm. Its function is as follows. Located at the top of the head of the 40S subunit, it contacts several helices of the 18S rRNA. In Argopecten irradians (Bay scallop), this protein is Small ribosomal subunit protein uS13 (RPS18).